A 163-amino-acid polypeptide reads, in one-letter code: Crossover junction endodeoxyribonuclease RuvC (163 aa).

Residues Asp9, Glu76, and Asp148 contribute to the active site. Mg(2+) is bound by residues Asp9, Glu76, and Asp148.

Belongs to the RuvC family. Homodimer which binds Holliday junction (HJ) DNA. The HJ becomes 2-fold symmetrical on binding to RuvC with unstacked arms; it has a different conformation from HJ DNA in complex with RuvA. In the full resolvosome a probable DNA-RuvA(4)-RuvB(12)-RuvC(2) complex forms which resolves the HJ. Requires Mg(2+) as cofactor.

It localises to the cytoplasm. It catalyses the reaction Endonucleolytic cleavage at a junction such as a reciprocal single-stranded crossover between two homologous DNA duplexes (Holliday junction).. In terms of biological role, the RuvA-RuvB-RuvC complex processes Holliday junction (HJ) DNA during genetic recombination and DNA repair. Endonuclease that resolves HJ intermediates. Cleaves cruciform DNA by making single-stranded nicks across the HJ at symmetrical positions within the homologous arms, yielding a 5'-phosphate and a 3'-hydroxyl group; requires a central core of homology in the junction. The consensus cleavage sequence is 5'-(A/T)TT(C/G)-3'. Cleavage occurs on the 3'-side of the TT dinucleotide at the point of strand exchange. HJ branch migration catalyzed by RuvA-RuvB allows RuvC to scan DNA until it finds its consensus sequence, where it cleaves and resolves the cruciform DNA. This is Crossover junction endodeoxyribonuclease RuvC from Nostoc punctiforme (strain ATCC 29133 / PCC 73102).